Here is a 228-residue protein sequence, read N- to C-terminus: CD9 antigen (228 aa).

Over 1 to 12 the chain is Cytoplasmic; the sequence is MPVKGGTKCIKY. A lipid anchor (S-palmitoyl cysteine) is attached at Cys9. Residues 13-33 traverse the membrane as a helical segment; the sequence is LLFGFNFIFWLAGIAVLAIGL. The Extracellular portion of the chain corresponds to 34–55; it reads WLRFDSQTKSIFEQETNNNNSS. 2 N-linked (GlcNAc...) asparagine glycosylation sites follow: Asn52 and Asn53. The helical transmembrane segment at 56 to 76 threads the bilayer; the sequence is FYTGVYILIGAGALMMLVGFL. Residues 77-87 are Cytoplasmic-facing; it reads GCCGAVQESQC. 3 S-palmitoyl cysteine lipidation sites follow: Cys78, Cys79, and Cys87. The helical transmembrane segment at 88–111 threads the bilayer; sequence MLGLFFGFLLVIFAIEIAAAIWGY. Residues 112–195 lie on the Extracellular side of the membrane; the sequence is SHKDEVIKEV…KEVFDNKFHI (84 aa). Intrachain disulfides connect Cys152–Cys181 and Cys153–Cys167. A helical membrane pass occupies residues 196 to 221; sequence IGAVGIGIAVVMIFGMIFSMILCCAI. 2 S-palmitoyl cysteine lipidation sites follow: Cys218 and Cys219. The Cytoplasmic portion of the chain corresponds to 222–228; it reads RRNREMV.

The protein belongs to the tetraspanin (TM4SF) family. In terms of assembly, forms both disulfide-linked homodimers and higher homooligomers as well as heterooligomers with other members of the tetraspanin family. Interacts (via the second extracellular domain) with integrin ITGAV:ITGB3. Interacts with integrin ITGA6:ITGB1; interaction takes place in oocytes and is involved in sperm-egg fusion. Part of integrin-tetraspanin complexes composed of CD81, beta-1 and beta-2 integrins in the membrane of monocyte/macrophages. Interacts with CD63; identified in a complex with CD63 and ITGB3. Associates with CR2/CD21 and with PTGFRN/CD9P1. Part of a complex composed of CD9, CD81, PTGFRN and IGSF8. Interacts directly with IGSF8. Interacts with PDPN; this interaction is homophilic and attenuates platelet aggregation and pulmonary metastasis induced by PDPN. Interacts (on T cell side) with CD81 at immunological synapses between antigen-presenting cells and T cells. Post-translationally, palmitoylated at a low, basal level in unstimulated platelets. The level of palmitoylation increases when platelets are activated by thrombin (in vitro). The protein exists in three forms with molecular masses between 22 and 27 kDa, and is known to carry covalently linked fatty acids. Palmitoylation by ZDHHC2 regulates CD9 expression, association with other tetraspanin family proteins and function in cell adhesion.

The protein resides in the cell membrane. It is found in the membrane. Its subcellular location is the secreted. It localises to the extracellular exosome. Functionally, integral membrane protein associated with integrins, which regulates different processes, such as sperm-egg fusion, platelet activation and aggregation, and cell adhesion. Present at the cell surface of oocytes and plays a key role in sperm-egg fusion, possibly by organizing multiprotein complexes and the morphology of the membrane required for the fusion. In myoblasts, associates with CD81 and PTGFRN and inhibits myotube fusion during muscle regeneration. In macrophages, associates with CD81 and beta-1 and beta-2 integrins, and prevents macrophage fusion into multinucleated giant cells specialized in ingesting complement-opsonized large particles. Also prevents the fusion between mononuclear cell progenitors into osteoclasts in charge of bone resorption. Acts as a receptor for PSG17. Involved in platelet activation and aggregation. Regulates paranodal junction formation. Involved in cell adhesion, cell motility and tumor metastasis. In Chlorocebus aethiops (Green monkey), this protein is CD9 antigen.